A 416-amino-acid polypeptide reads, in one-letter code: GTPase Obg (416 aa).

Residues 1-157 (MFQDVLVITV…RRLRLELMLI (157 aa)) enclose the Obg domain. Disordered regions lie at residues 25–44 (EKFV…GGSV) and 62–82 (TYKA…RGGE). Over residues 32 to 42 (GPDGGDGGRGG) the composition is skewed to gly residues. Positions 63–72 (YKAEDGEHGR) are enriched in basic and acidic residues. The OBG-type G domain occupies 158–324 (ADVGLVGYPN…LKEALHALVR (167 aa)). GTP-binding positions include 164–171 (GYPNAGKS), 189–193 (FTTLS), 211–214 (DIPG), 277–280 (NKVD), and 305–307 (SAL). Residues serine 171 and threonine 191 each coordinate Mg(2+). The 79-residue stretch at 336-414 (PRKEVQAGVE…IGGLEFEYIP (79 aa)) folds into the OCT domain.

The protein belongs to the TRAFAC class OBG-HflX-like GTPase superfamily. OBG GTPase family. In terms of assembly, monomer. Requires Mg(2+) as cofactor.

Its subcellular location is the cytoplasm. In terms of biological role, an essential GTPase which binds GTP, GDP and possibly (p)ppGpp with moderate affinity, with high nucleotide exchange rates and a fairly low GTP hydrolysis rate. Plays a role in control of the cell cycle, stress response, ribosome biogenesis and in those bacteria that undergo differentiation, in morphogenesis control. The protein is GTPase Obg of Thermus thermophilus (strain ATCC BAA-163 / DSM 7039 / HB27).